The chain runs to 225 residues: ATP phosphoribosyltransferase (225 aa).

The protein belongs to the ATP phosphoribosyltransferase family. Short subfamily. In terms of assembly, heteromultimer composed of HisG and HisZ subunits.

It is found in the cytoplasm. It carries out the reaction 1-(5-phospho-beta-D-ribosyl)-ATP + diphosphate = 5-phospho-alpha-D-ribose 1-diphosphate + ATP. Its pathway is amino-acid biosynthesis; L-histidine biosynthesis; L-histidine from 5-phospho-alpha-D-ribose 1-diphosphate: step 1/9. Its function is as follows. Catalyzes the condensation of ATP and 5-phosphoribose 1-diphosphate to form N'-(5'-phosphoribosyl)-ATP (PR-ATP). Has a crucial role in the pathway because the rate of histidine biosynthesis seems to be controlled primarily by regulation of HisG enzymatic activity. This Herminiimonas arsenicoxydans protein is ATP phosphoribosyltransferase.